A 525-amino-acid chain; its full sequence is Protein BSP1 (525 aa).

Disordered regions lie at residues isoleucine 21–glutamate 40, glutamine 98–methionine 262, leucine 285–lysine 325, and aspartate 339–isoleucine 525. The span at isoleucine 110 to serine 122 shows a compositional bias: basic and acidic residues. A compositionally biased stretch (polar residues) spans asparagine 148–alanine 162. Composition is skewed to basic and acidic residues over residues tyrosine 171–valine 182, aspartate 201–lysine 223, and lysine 230–arginine 242. Over residues glutamine 251–lysine 261 the composition is skewed to polar residues. The segment covering leucine 285–glutamate 297 has biased composition (low complexity). 2 stretches are compositionally biased toward basic and acidic residues: residues lysine 314 to lysine 325 and aspartate 339 to phenylalanine 354. The span at glutamine 382–lysine 398 shows a compositional bias: polar residues. The span at glutamate 447–proline 456 shows a compositional bias: acidic residues. Over residues asparagine 510–isoleucine 525 the composition is skewed to basic residues.

The protein localises to the cell membrane. It is found in the cytoplasm. The protein resides in the cytoskeleton. It localises to the actin patch. Functionally, cortical patch protein involved in endocytosis. This chain is Protein BSP1 (BSP1), found in Candida glabrata (strain ATCC 2001 / BCRC 20586 / JCM 3761 / NBRC 0622 / NRRL Y-65 / CBS 138) (Yeast).